The following is a 403-amino-acid chain: MIPPSGAREDGVDGLPKETASAEQPPSPASTGSQESKLQKLKRSLSFKTKSLRSKSADNFFQRTNSDVKLQADVLAGVSPGSSPLPAPGSLTCTPTRAGLYPGGGGKAHAFQEHIFKKPTFCDVCNHMIVGTNAKHGLRCKACKMSIHHKCMDGLAPQRCMGKLPKGFRRYYSSPLLIHEQFGCIKEVMPIACGNKVDPVYETLRFGTSLAQRTKKSSSGSGSDSPHRTSTSDLVEVPEEADGPGDGYDLRKRSNSVFTYPENGTDDFRDQAKNINHQGPLSKDPLQMNTYVALYKFVPQENEDLEMRPGDMITLLEDSNEDWWKGKIQDRIGFFPANFVQRVHQNEKIFRCVRTFSGCKEQGQITLKENQICVASEEEQDGFIRVLSGKKRGLVPLDVLENI.

The tract at residues 1-43 is disordered; it reads MIPPSGAREDGVDGLPKETASAEQPPSPASTGSQESKLQKLKR. The segment covering 21 to 36 has biased composition (polar residues); the sequence is SAEQPPSPASTGSQES. The Phorbol-ester/DAG-type zinc finger occupies 108 to 160; it reads AHAFQEHIFKKPTFCDVCNHMIVGTNAKHGLRCKACKMSIHHKCMDGLAPQRC. A disordered region spans residues 212–253; sequence QRTKKSSSGSGSDSPHRTSTSDLVEVPEEADGPGDGYDLRKR. SH3 domains lie at 286 to 345 and 348 to 403; these read LQMN…RVHQ and KIFR…LENI.

As to quaternary structure, interacts (via SH3 domains) with CACNA1S. Interacts with CACNA1H. Interacts with CACNA1C.

The protein localises to the cytoplasm. It is found in the cytosol. It localises to the cell membrane. The protein resides in the sarcolemma. Functionally, promotes expression of the ion channel CACNA1H at the cell membrane, and thereby contributes to the regulation of channel activity. Plays a minor and redundant role in promoting the expression of calcium channel CACNA1S at the cell membrane, and thereby contributes to increased channel activity. Slows down the inactivation rate of the calcium channel CACNA1C. This Bos taurus (Bovine) protein is SH3 and cysteine-rich domain-containing protein (STAC).